We begin with the raw amino-acid sequence, 316 residues long: Delta(1)-pyrroline-2-carboxylate reductase (316 aa).

The protein belongs to the ornithine cyclodeaminase/mu-crystallin family.

The enzyme catalyses L-proline + NAD(+) = 1-pyrroline-2-carboxylate + NADH + H(+). The catalysed reaction is L-proline + NADP(+) = 1-pyrroline-2-carboxylate + NADPH + H(+). Its function is as follows. Catalyzes the reduction of Delta(1)-pyrroline-2-carboxylate (Pyr2C) to L-proline, using preferentially NADPH over NADH as the electron donor. Is likely involved in a degradation pathway that converts trans-3-hydroxy-L-proline (t3LHyp) to L-proline, which would allow P.denitrificans to grow on t3LHyp as a sole carbon source. The sequence is that of Delta(1)-pyrroline-2-carboxylate reductase from Paracoccus denitrificans (strain Pd 1222).